Reading from the N-terminus, the 423-residue chain is ATP-dependent Clp protease ATP-binding subunit ClpX (423 aa).

One can recognise a ClpX-type ZB domain in the interval 1-50; it reads MTDDTEYRCSFCGKEHHQVDDLIAGPDVRICSECVVLSCEIVEDRRNEAL. 4 residues coordinate Zn(2+): Cys9, Cys12, Cys31, and Cys34. Residue 126 to 133 participates in ATP binding; sequence PTGCGKTY.

The protein belongs to the ClpX chaperone family. As to quaternary structure, component of the ClpX-ClpP complex. Forms a hexameric ring that, in the presence of ATP, binds to fourteen ClpP subunits assembled into a disk-like structure with a central cavity, resembling the structure of eukaryotic proteasomes.

ATP-dependent specificity component of the Clp protease. It directs the protease to specific substrates. Can perform chaperone functions in the absence of ClpP. This is ATP-dependent Clp protease ATP-binding subunit ClpX from Tropheryma whipplei (strain TW08/27) (Whipple's bacillus).